A 341-amino-acid polypeptide reads, in one-letter code: S-adenosylmethionine:tRNA ribosyltransferase-isomerase (341 aa).

It belongs to the QueA family. Monomer.

It localises to the cytoplasm. It catalyses the reaction 7-aminomethyl-7-carbaguanosine(34) in tRNA + S-adenosyl-L-methionine = epoxyqueuosine(34) in tRNA + adenine + L-methionine + 2 H(+). The protein operates within tRNA modification; tRNA-queuosine biosynthesis. Transfers and isomerizes the ribose moiety from AdoMet to the 7-aminomethyl group of 7-deazaguanine (preQ1-tRNA) to give epoxyqueuosine (oQ-tRNA). This Chlorobium phaeobacteroides (strain DSM 266 / SMG 266 / 2430) protein is S-adenosylmethionine:tRNA ribosyltransferase-isomerase.